A 149-amino-acid chain; its full sequence is MRAVIQRSKEASVTVANNIVGEIEHGLVVFLGVQASDTEKEIKWMAEKIRHLRIFEDDEGKMNHSLQDRGGKMLIVSQFTLYGDCRKGRRPSYSQAANPEFAKRIYDLFIEEVKKSGLEVATGIFQADMDVQLINDGPVTMLLDSEKIF.

Residues 137–138 (GP) carry the Gly-cisPro motif, important for rejection of L-amino acids motif.

The protein belongs to the DTD family. In terms of assembly, homodimer.

It localises to the cytoplasm. The catalysed reaction is glycyl-tRNA(Ala) + H2O = tRNA(Ala) + glycine + H(+). The enzyme catalyses a D-aminoacyl-tRNA + H2O = a tRNA + a D-alpha-amino acid + H(+). Its function is as follows. An aminoacyl-tRNA editing enzyme that deacylates mischarged D-aminoacyl-tRNAs. Also deacylates mischarged glycyl-tRNA(Ala), protecting cells against glycine mischarging by AlaRS. Acts via tRNA-based rather than protein-based catalysis; rejects L-amino acids rather than detecting D-amino acids in the active site. By recycling D-aminoacyl-tRNA to D-amino acids and free tRNA molecules, this enzyme counteracts the toxicity associated with the formation of D-aminoacyl-tRNA entities in vivo and helps enforce protein L-homochirality. The protein is D-aminoacyl-tRNA deacylase of Desulfotalea psychrophila (strain LSv54 / DSM 12343).